Consider the following 38-residue polypeptide: Tyrosinase inhibitor (38 aa).

3 cysteine pairs are disulfide-bonded: cysteine 11–cysteine 25, cysteine 18–cysteine 29, and cysteine 24–cysteine 36. Residue tyrosine 32 is modified to 3',4'-dihydroxyphenylalanine.

As to quaternary structure, monomer. In terms of processing, contains L-DOPA (3',4'-dihydroxyphenylalanine).

Its subcellular location is the secreted. Its function is as follows. Potent reversible, competitive inhibitor of tyrosinase (phenol oxidase) in the nanomolar range. The chain is Tyrosinase inhibitor from Musca domestica (House fly).